Reading from the N-terminus, the 300-residue chain is tRNA dimethylallyltransferase 1 (300 aa).

10–17 (GPTGVGKT) is an ATP binding site. 12 to 17 (TGVGKT) contributes to the substrate binding site. Positions 35–38 (DSRQ) are interaction with substrate tRNA.

Belongs to the IPP transferase family. Monomer. Requires Mg(2+) as cofactor.

The catalysed reaction is adenosine(37) in tRNA + dimethylallyl diphosphate = N(6)-dimethylallyladenosine(37) in tRNA + diphosphate. Functionally, catalyzes the transfer of a dimethylallyl group onto the adenine at position 37 in tRNAs that read codons beginning with uridine, leading to the formation of N6-(dimethylallyl)adenosine (i(6)A). This is tRNA dimethylallyltransferase 1 from Phocaeicola vulgatus (strain ATCC 8482 / DSM 1447 / JCM 5826 / CCUG 4940 / NBRC 14291 / NCTC 11154) (Bacteroides vulgatus).